The chain runs to 118 residues: Small integral membrane protein 17 (118 aa).

A disordered region spans residues 1-84 (MQSLRPEQTR…DDESEGSQGF (84 aa)). Residues 13–42 (LEPERTKTLLPRESRAWEKPPHPACTKDWE) show a composition bias toward basic and acidic residues. The helical transmembrane segment at 96–116 (IVLVVCVLFLFLVLTGMPMMF) threads the bilayer.

The protein resides in the membrane. This Homo sapiens (Human) protein is Small integral membrane protein 17 (SMIM17).